The following is an 86-amino-acid chain: U22-theraphotoxin-Cg1a (86 aa).

The signal sequence occupies residues 1–20; it reads MKVSVVLAITVLALLSVAYA. A propeptide spanning residues 21–51 is cleaved from the precursor; the sequence is SEFEEKELVKEVVRTIFLGKEDAALREETDR. Disulfide bonds link Cys-53–Cys-67, Cys-60–Cys-72, and Cys-66–Cys-79. Phenylalanine amide is present on Phe-85.

This sequence belongs to the neurotoxin 10 (Hwtx-1) family. 42 (Jztx-44) subfamily. In terms of tissue distribution, expressed by the venom gland.

It localises to the secreted. Probable ion channel inhibitor. This chain is U22-theraphotoxin-Cg1a, found in Chilobrachys guangxiensis (Chinese earth tiger tarantula).